The following is a 142-amino-acid chain: Universal stress protein C (142 aa).

The protein belongs to the universal stress protein A family.

It is found in the cytoplasm. Functionally, required for resistance to DNA-damaging agents. The chain is Universal stress protein C (uspC) from Escherichia coli O6:H1 (strain CFT073 / ATCC 700928 / UPEC).